The following is a 458-amino-acid chain: UDP-N-acetylmuramate--L-alanine ligase (458 aa).

Residue 118 to 124 coordinates ATP; sequence GTHGKTT.

The protein belongs to the MurCDEF family.

It is found in the cytoplasm. It carries out the reaction UDP-N-acetyl-alpha-D-muramate + L-alanine + ATP = UDP-N-acetyl-alpha-D-muramoyl-L-alanine + ADP + phosphate + H(+). The protein operates within cell wall biogenesis; peptidoglycan biosynthesis. In terms of biological role, cell wall formation. In Clostridium botulinum (strain ATCC 19397 / Type A), this protein is UDP-N-acetylmuramate--L-alanine ligase.